Here is a 160-residue protein sequence, read N- to C-terminus: MKIYIQPLSVNSHTVEVLANSLPKIFNAEVFVLPASDVSLKCYNASRRQYNSTCILRMLPPIKVTLGVTGKDIYAKGMNFVFGEAELGGARAVLSVFRLTTADSELYRERVVKEAVHEIGHVLGLKHCSNNCVMRFSNSVQDVDRKPVSFCRECASKIRY.

Histidine 117 provides a ligand contact to Zn(2+). Catalysis depends on glutamate 118, which acts as the Proton acceptor. Residues histidine 121, histidine 127, cysteine 128, cysteine 132, cysteine 151, and cysteine 154 each contribute to the Zn(2+) site.

Belongs to the peptidase M54 family. In terms of assembly, monomer. Requires Zn(2+) as cofactor.

Probable zinc metalloprotease whose natural substrate is unknown. In Archaeoglobus fulgidus (strain ATCC 49558 / DSM 4304 / JCM 9628 / NBRC 100126 / VC-16), this protein is Archaemetzincin.